The primary structure comprises 213 residues: Large ribosomal subunit protein uL3 (213 aa).

Residues 135–155 form a disordered region; that stretch reads THGSKNHRLPGSTGAGTTPGR.

The protein belongs to the universal ribosomal protein uL3 family. Part of the 50S ribosomal subunit. Forms a cluster with proteins L14 and L19.

In terms of biological role, one of the primary rRNA binding proteins, it binds directly near the 3'-end of the 23S rRNA, where it nucleates assembly of the 50S subunit. In Synechocystis sp. (strain ATCC 27184 / PCC 6803 / Kazusa), this protein is Large ribosomal subunit protein uL3.